A 105-amino-acid polypeptide reads, in one-letter code: UPF0145 protein lpp0255 (105 aa).

This sequence belongs to the UPF0145 family.

The protein is UPF0145 protein lpp0255 of Legionella pneumophila (strain Paris).